Consider the following 425-residue polypeptide: Isocitrate dehydrogenase [NADP] (425 aa).

Position 114 (T114) interacts with NADP(+). Positions 123, 125, 129, 139, and 162 each coordinate D-threo-isocitrate. D316 lines the Mg(2+) pocket. Residues 348-354 (HGTAPKY), N361, Y400, and R404 each bind NADP(+).

The protein belongs to the isocitrate and isopropylmalate dehydrogenases family. In terms of assembly, homodimer. Mg(2+) serves as cofactor. The cofactor is Mn(2+).

The catalysed reaction is D-threo-isocitrate + NADP(+) = 2-oxoglutarate + CO2 + NADPH. Functionally, catalyzes the oxidative decarboxylation of isocitrate to 2-oxoglutarate and carbon dioxide with the concomitant reduction of NADP(+). The chain is Isocitrate dehydrogenase [NADP] (icd) from Helicobacter pylori (strain ATCC 700392 / 26695) (Campylobacter pylori).